The chain runs to 427 residues: Pre-mRNA-splicing factor PRP46 (427 aa).

WD repeat units lie at residues 113–153, 156–195, 198–237, 240–281, 283–322, 324–362, and 373–412; these read GHHG…LKVT, AHDMTVRDLAISNRHPYMFSVSEDKTVKCWDLEKNTAIRN, GHLSGVHTVDIHPTVDVVVTAGRDSVVKVWDIRTRLPVMT, GHKG…KVLT, HQRTVRDISVHPSEFSFASACTNDIRSWLLPKGELLTNFV, QDLDVINTVSINQDDVLFAGSDNGSLTFFDYKSGHKYQT, and ESERGILSSTFDGTGLRLLTGETDRTIKIWKQDETASQDT. Residues 404–427 form a disordered region; the sequence is QDETASQDTHPNLPWNPKLDSQRL.

The protein belongs to the WD repeat PRL1/PRL2 family. Associated with the spliceosome.

The protein localises to the cytoplasm. It is found in the nucleus. Involved in pre-mRNA splicing and required for cell cycle progression at G2/M. In Candida glabrata (strain ATCC 2001 / BCRC 20586 / JCM 3761 / NBRC 0622 / NRRL Y-65 / CBS 138) (Yeast), this protein is Pre-mRNA-splicing factor PRP46 (PRP46).